The chain runs to 233 residues: Putative N-acetylmannosamine-6-phosphate 2-epimerase (233 aa).

It belongs to the NanE family.

It catalyses the reaction an N-acyl-D-glucosamine 6-phosphate = an N-acyl-D-mannosamine 6-phosphate. Its pathway is amino-sugar metabolism; N-acetylneuraminate degradation; D-fructose 6-phosphate from N-acetylneuraminate: step 3/5. Functionally, converts N-acetylmannosamine-6-phosphate (ManNAc-6-P) to N-acetylglucosamine-6-phosphate (GlcNAc-6-P). This is Putative N-acetylmannosamine-6-phosphate 2-epimerase from Yersinia pestis bv. Antiqua (strain Antiqua).